A 231-amino-acid polypeptide reads, in one-letter code: DNA mismatch repair protein MutH (231 aa).

Belongs to the MutH family.

It is found in the cytoplasm. Functionally, sequence-specific endonuclease that cleaves unmethylated GATC sequences. It is involved in DNA mismatch repair. In Pectobacterium atrosepticum (strain SCRI 1043 / ATCC BAA-672) (Erwinia carotovora subsp. atroseptica), this protein is DNA mismatch repair protein MutH.